The following is a 141-amino-acid chain: Small ribosomal subunit protein bS6 (141 aa).

The tract at residues 96–141 is disordered; the sequence is VTGQSEMLKAEENRSERRERRERPEHADSAEGDDSNDSDSSDNADE. A compositionally biased stretch (basic and acidic residues) spans 103-124; that stretch reads LKAEENRSERRERRERPEHADS. Positions 125–141 are enriched in acidic residues; that stretch reads AEGDDSNDSDSSDNADE.

This sequence belongs to the bacterial ribosomal protein bS6 family.

Binds together with bS18 to 16S ribosomal RNA. The polypeptide is Small ribosomal subunit protein bS6 (Pseudomonas putida (strain ATCC 700007 / DSM 6899 / JCM 31910 / BCRC 17059 / LMG 24140 / F1)).